A 304-amino-acid chain; its full sequence is Cyclin-dependent kinase 3 (304 aa).

A Protein kinase domain is found at 4–286 (FQKVEKIGEG…AKTALAHPYF (283 aa)). Residues 10-18 (IGEGTYGVV) and Lys-33 each bind ATP. Residue Asp-127 is the Proton acceptor of the active site.

This sequence belongs to the protein kinase superfamily. CMGC Ser/Thr protein kinase family. CDC2/CDKX subfamily. In terms of assembly, interacts with CABLES1 and ATF1. Binding to CCNC/cyclin-C promotes RB1 phosphorylation. Binds to CABLES2.

The enzyme catalyses L-seryl-[protein] + ATP = O-phospho-L-seryl-[protein] + ADP + H(+). It carries out the reaction L-threonyl-[protein] + ATP = O-phospho-L-threonyl-[protein] + ADP + H(+). In terms of biological role, serine/threonine-protein kinase that plays a critical role in the control of the eukaryotic cell cycle; involved in G0-G1 and G1-S cell cycle transitions. Interacts with CCNC/cyclin-C during interphase. Phosphorylates histone H1, ATF1, RB1 and CABLES1. ATF1 phosphorylation triggers ATF1 transactivation and transcriptional activities, and promotes cell proliferation and transformation. CDK3/cyclin-C mediated RB1 phosphorylation is required for G0-G1 transition. Promotes G1-S transition probably by contributing to the activation of E2F1, E2F2 and E2F3 in a RB1-independent manner. In Mus musculus (Mouse), this protein is Cyclin-dependent kinase 3 (Cdk3).